We begin with the raw amino-acid sequence, 156 residues long: Ribosome maturation factor RimP (156 aa).

Belongs to the RimP family.

Its subcellular location is the cytoplasm. In terms of biological role, required for maturation of 30S ribosomal subunits. This Bacillus mycoides (strain KBAB4) (Bacillus weihenstephanensis) protein is Ribosome maturation factor RimP.